The sequence spans 234 residues: tRNA (guanine-N(1)-)-methyltransferase (234 aa).

Residues G112 and I132 to L137 each bind S-adenosyl-L-methionine.

It belongs to the RNA methyltransferase TrmD family. In terms of assembly, homodimer.

Its subcellular location is the cytoplasm. The enzyme catalyses guanosine(37) in tRNA + S-adenosyl-L-methionine = N(1)-methylguanosine(37) in tRNA + S-adenosyl-L-homocysteine + H(+). Specifically methylates guanosine-37 in various tRNAs. The sequence is that of tRNA (guanine-N(1)-)-methyltransferase from Campylobacter jejuni subsp. doylei (strain ATCC BAA-1458 / RM4099 / 269.97).